The sequence spans 562 residues: Putative transport protein YPA_0617 (562 aa).

The next 6 membrane-spanning stretches (helical) occupy residues 8-28, 37-57, 66-86, 94-114, 118-138, and 158-178; these read LLNG…LCLG, LGNA…HFAI, FMLF…SIFF, MLAL…GKLF, IGLT…LVGA, and NLSL…ILGA. RCK C-terminal domains lie at 202-288 and 290-373; these read LDTD…SFRN and KEVF…KIGF. 5 consecutive transmembrane segments (helical) span residues 383–403, 406–426, 447–467, 475–495, and 541–561; these read LLAF…TFQF, FSFG…LGFL, FGLM…INSS, MLIS…VFGA, and IANV…PGIL.

It belongs to the AAE transporter (TC 2.A.81) family. YbjL subfamily.

Its subcellular location is the cell membrane. The polypeptide is Putative transport protein YPA_0617 (Yersinia pestis bv. Antiqua (strain Antiqua)).